Reading from the N-terminus, the 509-residue chain is Heat shock 70 kDa protein 14 (509 aa).

Belongs to the heat shock protein 70 family. As to quaternary structure, component of ribosome-associated complex (RAC), a heterodimer composed of Hsp70/DnaK-type chaperone HSPA14 and Hsp40/DnaJ-type chaperone DNAJC2.

It localises to the cytoplasm. The protein localises to the cytosol. Component of the ribosome-associated complex (RAC), a complex involved in folding or maintaining nascent polypeptides in a folding-competent state. In the RAC complex, binds to the nascent polypeptide chain, while DNAJC2 stimulates its ATPase activity. The polypeptide is Heat shock 70 kDa protein 14 (Hspa14) (Rattus norvegicus (Rat)).